We begin with the raw amino-acid sequence, 507 residues long: MGKAAAVGTAVVVAAAVGVAVVLARRRRRRDLELVEGAAAERKRKVAAVIEDVEHALSTPTALLRGISDAMVTEMERGLRGDSHAMVKMLITYVDNLPTGNEQGLFYALDLGGTNFRVLRVQLGGKEKRVVQQQYEEVSIPPHLMVGTSMELFDFIASALSKFVDTEGDDFHLPEGRQRELGFTFSFPVSQTSISSGTLIKWTKGFSINDAVGEDVVSELGKAMERQGLDMKIAALVNDTVGTLAGGRYADNSVVAAIILGTGTNAAYVENANAIPKWTGLLPRSGNMVINTEWGSFKSDKLPLSEFDKAMDFESLNPGEQIYEKLISGMYLGEIVRRILLKLAHDAALFGDVVPSKLEQPFVLRTPDMSAMHHDSSHDLKTVGAKLKDIVGVPDTSLEVRYITSHICDIVAERAARLAAAGIYGVLKKLGRDKMPKDGSKMPRTVIALDGGLYEHYKKFSSCLESTLTDLLGDDVSSSVVTKLANDGSGIGAALLAASHSQYAEID.

Residues 4–24 (AAAVGTAVVVAAAVGVAVVLA) traverse the membrane as a helical segment. In terms of domain architecture, Hexokinase spans 44-498 (RKVAAVIEDV…SGIGAALLAA (455 aa)). The hexokinase small subdomain stretch occupies residues 99-237 (TGNEQGLFYA…GLDMKIAALV (139 aa)). Positions 113, 114, and 115 each coordinate ADP. 4 residues coordinate D-glucose: threonine 203, lysine 204, asparagine 238, and aspartate 239. The hexokinase large subdomain stretch occupies residues 238-487 (NDTVGTLAGG…SSVVTKLAND (250 aa)). An ADP-binding site is contributed by threonine 262. Asparagine 265, glutamate 293, and glutamate 324 together coordinate D-glucose. Glycine 452 lines the ADP pocket.

The protein belongs to the hexokinase family. As to expression, expressed in roots, leaves, flowers, immature seeds, endosperm and seed coat.

The protein localises to the plastid. It is found in the chloroplast outer membrane. It catalyses the reaction a D-hexose + ATP = a D-hexose 6-phosphate + ADP + H(+). The catalysed reaction is D-fructose + ATP = D-fructose 6-phosphate + ADP + H(+). It carries out the reaction D-glucose + ATP = D-glucose 6-phosphate + ADP + H(+). It functions in the pathway carbohydrate metabolism; hexose metabolism. Its pathway is carbohydrate degradation; glycolysis; D-glyceraldehyde 3-phosphate and glycerone phosphate from D-glucose: step 1/4. Its function is as follows. Fructose and glucose phosphorylating enzyme. Functions as a glucose sensor for plant growth and photosynthesis. Is essential for pollen development, germination, and tube growth. Its activity is necessary for the starch utilization pathway during pollen germination and tube growth, as well as for starch biosynthesis during pollen maturation. In Oryza sativa subsp. japonica (Rice), this protein is Hexokinase-5 (HXK5).